The chain runs to 134 residues: Histone H3-like centromeric protein A (134 aa).

Positions 1 to 14 (MGPRRKPQTPRRRP) are enriched in basic residues. The interval 1-34 (MGPRRKPQTPRRRPSSPAPGPSRQSSSVGSQTLR) is disordered. The residue at position 2 (Gly-2) is a N,N,N-trimethylglycine. Residues Ser-16 and Ser-22 each carry the phosphoserine modification. The interval 34-48 (RRRQKFMWLKEIKTL) is important for flexibility of DNA ends that protrude from nucleosomes. Residues 35 to 134 (RRQKFMWLKE…RIRGFEGGLP (100 aa)) form an H3-like region. Ser-62 is subject to Phosphoserine. The CATD stretch occupies residues 69–110 (CEKFSRGVDFWWQAQALLALQEAAEAFLIHLFEDAYLLSLHA).

It belongs to the histone H3 family. As to quaternary structure, component of centromeric nucleosomes, where DNA is wrapped around a histone octamer core. The octamer contains two molecules each of H2A, H2B, CENPA and H4 assembled in one CENPA-H4 heterotetramer and two H2A-H2B heterodimers. CENPA modulates the DNA-binding characteristics of nucleosomes so that protruding DNA ends have higher flexibility than in nucleosomes containing conventional histone H3. Inhibits binding of histone H1 to nucleosomes, since histone H1 binds preferentially to rigid DNA linkers that protrude from nucleosomes. Nucleosomes containing CENPA also contain histone H2A variants such as MACROH2A and H2A.Z/H2AZ1. The CENPA-H4 heterotetramer is more compact and structurally more rigid than corresponding H3-H4 heterotetramers. Can assemble into nucleosomes that contain both CENPA and histone H3.3; these nucleosomes interact with a single CENPC chain. Heterotrimer composed of HJURP, CENPA and histone H4, where HJURP interacts with the dimer formed by CENPA and histone H4 and prevents tetramerization of CENPA and H4. Component of the CENPA-NAC complex, at least composed of CENPA, CENPC, CENPH, CENPM, CENPN, CENPT and CENPU. Interacts (via CATD domain) with HJURP; the interaction is direct and is required for its localization to centromeres. Interacts with CENPC, CENPN and CENPT; interaction is direct. Part of a centromere complex consisting of CENPA, CENPT and CENPW. Identified in centromere complexes containing histones H2A, H2B and H4, and at least CENPA, CENPB, CENPC, CENPT, CENPN, HJURP, SUPT16H, SSRP1 and RSF1. Can self-associate. The CENPA-H4 heterotetramer can bind DNA by itself (in vitro). Interacts with CDK1, PPP1CA and RBBP7. In terms of processing, poly-ADP-ribosylated by PARP1. Post-translationally, trimethylated by NTMT1 at the N-terminal glycine after cleavage of Met-1. Methylation is low before incorporation into nucleosomes and increases with cell cycle progression, with the highest levels in mitotic nucleosomes. Phosphorylated by CDK1 at Ser-62 during early mitosis; this abolishes association with chromatin and centromeres, prevents interaction with HJURP and thereby prevents premature assembly of CENPA into centromeres. Dephosphorylated at Ser-62 by PPP1CA during late mitosis.

It localises to the nucleus. Its subcellular location is the chromosome. It is found in the centromere. Functionally, histone H3-like nucleosomal protein that is specifically found in centromeric nucleosomes. Replaces conventional H3 in the nucleosome core of centromeric chromatin that serves as an assembly site for the inner kinetochore. The presence of CENPA subtly modifies the nucleosome structure and the way DNA is wrapped around the nucleosome and gives rise to protruding DNA ends that are less well-ordered and rigid compared to nucleosomes containing histone H3. May serve as an epigenetic mark that propagates centromere identity through replication and cell division. Required for recruitment and assembly of kinetochore proteins, and as a consequence required for progress through mitosis, chromosome segregation and cytokinesis. The polypeptide is Histone H3-like centromeric protein A (Cenpa) (Mus musculus (Mouse)).